We begin with the raw amino-acid sequence, 156 residues long: Cytochrome c-type biogenesis protein CcmE 1 (156 aa).

At 1-8 the chain is on the cytoplasmic side; sequence MNATRKQR. A helical; Signal-anchor for type II membrane protein membrane pass occupies residues 9–29; the sequence is LWLVIGVLAAAALAVTLIVFA. Residues 30–156 are Periplasmic-facing; sequence LQRNMSYLFT…ATVAPLTAPR (127 aa). Residues His123 and Tyr127 each contribute to the heme site.

This sequence belongs to the CcmE/CycJ family.

The protein localises to the cell inner membrane. In terms of biological role, heme chaperone required for the biogenesis of c-type cytochromes. Transiently binds heme delivered by CcmC and transfers the heme to apo-cytochromes in a process facilitated by CcmF and CcmH. The protein is Cytochrome c-type biogenesis protein CcmE 1 of Xanthomonas axonopodis pv. citri (strain 306).